We begin with the raw amino-acid sequence, 79 residues long: Large ribosomal subunit protein bL28 (79 aa).

Belongs to the bacterial ribosomal protein bL28 family.

The polypeptide is Large ribosomal subunit protein bL28 (Blochmanniella floridana).